Here is a 376-residue protein sequence, read N- to C-terminus: Peroxisomal targeting signal 2 receptor (376 aa).

WD repeat units follow at residues 58–98, 102–142, 182–222, 226–267, 279–319, and 339–376; these read DTQD…YPVM, EHQR…NTSL, DNND…PLFM, AHNG…PNVH, GHEF…TSRV, and AHTEFVMGCDWSLWGEPGWVVTTGWDEMVYVWNTQRLQ.

Belongs to the WD repeat peroxin-7 family. Interacts with PEX20. Polyubiquitinated, leading to its degradation by the proteasome. Ubiquitination is dependent of PEX5 and PEX20 and takes place following recycling into the cytosol.

It is found in the cytoplasm. It localises to the cytosol. Its subcellular location is the peroxisome matrix. In terms of biological role, receptor required for the peroxisomal import of proteins containing a C-terminal PTS2-type peroxisomal targeting signal, such as 3-oxoacyl-CoA thiolase. Specifically binds to cargo proteins containing a PTS2 peroxisomal targeting signal in the cytosol. Cargo protein-binding triggers interaction with PEX20 and formation of a ternary complex composed of PEX20 and PEX7 along with PTS2-containing cargo proteins, which is tranlocated into peroxisomes by passing through the peroxisomal docking complex. PEX7 receptor is then retrotranslocated into the cytosol, where it is ubiquitinated and degraded. The chain is Peroxisomal targeting signal 2 receptor from Komagataella phaffii (strain GS115 / ATCC 20864) (Yeast).